The sequence spans 191 residues: Divergent paired-related homeobox (191 aa).

Residues 1–15 (MPGSEDLRKGKDQMH) are compositionally biased toward basic and acidic residues. The segment at 1-20 (MPGSEDLRKGKDQMHSHRKR) is disordered. The homeobox DNA-binding region spans 16–75 (SHRKRTMFTKKQLEDLNILFNENPYPNPSLQKEMASKIDIHPTVLQVWFKNHRAKLKKAK).

It belongs to the paired homeobox family.

The protein resides in the nucleus. In terms of biological role, transcription factor that acts as a repressor. This is Divergent paired-related homeobox from Homo sapiens (Human).